The primary structure comprises 768 residues: MHQHMLGPSTSLGGTNNSALQSSVLSEGVLLSHSQPTREEIKKNFETREGVYRSVPSAEFSRPRPLPQYHMPPGIASAAASQIAAAGSTVRVSFLNGAEKSVESPEAVAPTSSTYEHHKNEPNGARIDMVDEAQADKICFNVGKELYVFSYRGTQTETDLSRPIDKRVYKGTSPTYHAFNQESAKNGSCQLLIGFTLGQLQIIDPLEKSSSSPFSRLYNEDRYIEKTSVTCIRWLPGDSNIFLASYVSGNLYVYDQRISAASSNNNGSSQPPPWTIHKEGDKFAIHTWKGKVQRNPVTRWQIGEGSIHQFSFSGSDGKMMATVSHDGFLRIFNYHAQELLAVMKSYFGGLLTLSWSPDAKLIATGGEDDLLTVYSVAEKRVVCRGQAHKSWVSQVKFDPYLCTTEEDLENNGIAMTSTFDDVAKDFSIRSGPVPSTSADLNSGVMNATSTFSRCSLASFNTINGAPAGNSVRYRIGSVGHDTFLCLWDITEDMLNQGNIRRHRNSTIIAPMTTLEVQTNSLVGRLEDLQEVSPGGAGVNASSDSQSITNNHTTPRPEKQKKKKFTKRLGFSKFTSGSSSATSNPVGGHKIGTLMNGASVNSESSKKQNPGLISQISCCNETRMLGSKFCPGIRDVPMIEPLMCKKVSHDRLTVLEFREDCVVTACQEGYICTWGRPGRYQPKRDCINSPGTASPESGQKPSGSTSAMTSSYGYGSDALNGVPPSRSSSTYSNSEQQLRSPNITSPSYRVSAASTSVYHRPTYAWQNAN.

A disordered region spans residues 103–122 (ESPEAVAPTSSTYEHHKNEP). WD repeat units lie at residues 224–264 (IEKT…ASSN), 302–342 (IGEG…LLAV), 345–384 (SYFG…VVCR), and 454–497 (CSLA…LNQG). The segment at 531–608 (VSPGGAGVNA…VNSESSKKQN (78 aa)) is disordered. Polar residues predominate over residues 539-553 (NASSDSQSITNNHTT). The span at 570–582 (FSKFTSGSSSATS) shows a compositional bias: low complexity. Residues 595–608 (NGASVNSESSKKQN) show a composition bias toward polar residues. A WD 5 repeat occupies 646–683 (VSHDRLTVLEFREDCVVTACQEGYICTWGRPGRYQPKR). The segment at 684–749 (DCINSPGTAS…PNITSPSYRV (66 aa)) is disordered. Over residues 688–712 (SPGTASPESGQKPSGSTSAMTSSYG) the composition is skewed to polar residues. Positions 724–733 (SRSSSTYSNS) are enriched in low complexity. The span at 734-749 (EQQLRSPNITSPSYRV) shows a compositional bias: polar residues.

In terms of assembly, interacts with usp-46; the interaction increases the catalytic activity of usp-46 in the presence of wdr-48. In terms of tissue distribution, expressed in several neurons in the head and tail.

Together with wdr-48, binds to and stimulates the activity of the deubiquitinating enzyme usp-46, leading to deubiquitination and stabilization of the glr-1 glutamate receptor. The protein is WD repeat-containing protein 20 homolog of Caenorhabditis elegans.